A 31-amino-acid chain; its full sequence is Cytochrome b6-f complex subunit 6 (31 aa).

Residues 4-24 (ITSYFGFLLAALTITSALFIG) traverse the membrane as a helical segment.

It belongs to the PetL family. In terms of assembly, the 4 large subunits of the cytochrome b6-f complex are cytochrome b6, subunit IV (17 kDa polypeptide, PetD), cytochrome f and the Rieske protein, while the 4 small subunits are PetG, PetL, PetM and PetN. The complex functions as a dimer.

It is found in the plastid. It localises to the chloroplast thylakoid membrane. Its function is as follows. Component of the cytochrome b6-f complex, which mediates electron transfer between photosystem II (PSII) and photosystem I (PSI), cyclic electron flow around PSI, and state transitions. PetL is important for photoautotrophic growth as well as for electron transfer efficiency and stability of the cytochrome b6-f complex. The protein is Cytochrome b6-f complex subunit 6 of Coffea arabica (Arabian coffee).